We begin with the raw amino-acid sequence, 124 residues long: Small ribosomal subunit protein uS12 (124 aa).

Aspartate 89 bears the 3-methylthioaspartic acid mark.

This sequence belongs to the universal ribosomal protein uS12 family. Part of the 30S ribosomal subunit. Contacts proteins S8 and S17. May interact with IF1 in the 30S initiation complex.

Its function is as follows. With S4 and S5 plays an important role in translational accuracy. Functionally, interacts with and stabilizes bases of the 16S rRNA that are involved in tRNA selection in the A site and with the mRNA backbone. Located at the interface of the 30S and 50S subunits, it traverses the body of the 30S subunit contacting proteins on the other side and probably holding the rRNA structure together. The combined cluster of proteins S8, S12 and S17 appears to hold together the shoulder and platform of the 30S subunit. This Shewanella oneidensis (strain ATCC 700550 / JCM 31522 / CIP 106686 / LMG 19005 / NCIMB 14063 / MR-1) protein is Small ribosomal subunit protein uS12.